We begin with the raw amino-acid sequence, 570 residues long: Sulfite reductase [NADPH] hemoprotein beta-component (570 aa).

The [4Fe-4S] cluster site is built by cysteine 434, cysteine 440, cysteine 479, and cysteine 483. Siroheme is bound at residue cysteine 483.

It belongs to the nitrite and sulfite reductase 4Fe-4S domain family. In terms of assembly, alpha(8)-beta(8). The alpha component is a flavoprotein, the beta component is a hemoprotein. Requires siroheme as cofactor. The cofactor is [4Fe-4S] cluster.

It catalyses the reaction hydrogen sulfide + 3 NADP(+) + 3 H2O = sulfite + 3 NADPH + 4 H(+). The protein operates within sulfur metabolism; hydrogen sulfide biosynthesis; hydrogen sulfide from sulfite (NADPH route): step 1/1. Component of the sulfite reductase complex that catalyzes the 6-electron reduction of sulfite to sulfide. This is one of several activities required for the biosynthesis of L-cysteine from sulfate. This chain is Sulfite reductase [NADPH] hemoprotein beta-component, found in Escherichia coli O7:K1 (strain IAI39 / ExPEC).